Here is an 801-residue protein sequence, read N- to C-terminus: Cadherin-20 (801 aa).

The signal sequence occupies residues 1–34; the sequence is MWTTGRMSNAKSWLGLGTSLYFWALMDLATTVLS. A propeptide spanning residues 35–59 is cleaved from the precursor; sequence STPMPEVELDTLFSGKPQSHQRSRR. The Extracellular segment spans residues 60–619; that stretch reads SWVWNQFFVL…AYMLPVSLSR (560 aa). Cadherin domains follow at residues 61–165, 166–274, 275–389, 390–494, and 494–610; these read WVWN…EPKF, LDGP…PPRF, PQKH…PPVF, EPRF…APEF, and FPRF…SPEA. N-linked (GlcNAc...) asparagine glycosylation is present at asparagine 261. 3 N-linked (GlcNAc...) asparagine glycosylation sites follow: asparagine 420, asparagine 461, and asparagine 542. Residues 620-640 form a helical membrane-spanning segment; sequence GALIAILACVFVLLVLVLLIL. Topologically, residues 641–801 are cytoplasmic; it reads SMRRHRKQPY…GASEGPSPLW (161 aa).

The protein localises to the cell membrane. Cadherins are calcium-dependent cell adhesion proteins. They preferentially interact with themselves in a homophilic manner in connecting cells; cadherins may thus contribute to the sorting of heterogeneous cell types. In Rattus norvegicus (Rat), this protein is Cadherin-20 (Cdh20).